The following is a 362-amino-acid chain: MSFFRCIGRSALFMLDPEHAHRLAIMGLKSGLNSYQKVVDNRLCVTIAGLKFENFIGLAAGFDKNAEVVNDVFHLGFGFTEIGTVTPRPQVGNPKPRLFRLRKDEAIINRMGFNNDGRQIVYGRLHGYKRLGIVGINIGANKDTVDKIDDYITSIAYFYDVADYFTVNISSPNTPGLRDLQVRDSLHLLMNAISQARNEQKKKHGFFVPIFLKIAPDLSEKELDDVAEEMKLSDFDGLIVSNTTLSRQGLRECTLRNEEGGLSGRPLFERSTIVLAKMRQKLGKKIAIIGVGGIRDAKTALEKVKAGADLVQLYSGMVYEGPDLAITILKEILQFMQKDGVESIKAYRDQRVEYWAKHMLSS.

Residues alanine 60–lysine 64 and threonine 84 each bind FMN. Lysine 64 serves as a coordination point for substrate. Asparagine 109–phenylalanine 113 is a substrate binding site. Residues asparagine 137 and asparagine 168 each coordinate FMN. Asparagine 168 is a substrate binding site. The Nucleophile role is filled by serine 171. Asparagine 173 provides a ligand contact to substrate. FMN-binding residues include lysine 213 and serine 241. Asparagine 242 to threonine 243 contributes to the substrate binding site. Residues glycine 264, glycine 293, and tyrosine 314 to serine 315 each bind FMN.

Belongs to the dihydroorotate dehydrogenase family. Type 2 subfamily. In terms of assembly, monomer. Requires FMN as cofactor.

The protein localises to the cell membrane. It carries out the reaction (S)-dihydroorotate + a quinone = orotate + a quinol. Its pathway is pyrimidine metabolism; UMP biosynthesis via de novo pathway; orotate from (S)-dihydroorotate (quinone route): step 1/1. In terms of biological role, catalyzes the conversion of dihydroorotate to orotate with quinone as electron acceptor. In Bartonella henselae (strain ATCC 49882 / DSM 28221 / CCUG 30454 / Houston 1) (Rochalimaea henselae), this protein is Dihydroorotate dehydrogenase (quinone).